Here is a 138-residue protein sequence, read N- to C-terminus: Single-stranded DNA-binding protein 3 (138 aa).

The 104-residue stretch at Met-1–Glu-104 folds into the SSB domain. The segment covering Ser-105–Ser-121 has biased composition (low complexity). Residues Ser-105–Phe-138 are disordered. Positions Asp-133–Phe-138 match the Important for interaction with partner proteins motif.

Homotetramer.

Plays an important role in DNA replication, recombination and repair. Binds to ssDNA and to an array of partner proteins to recruit them to their sites of action during DNA metabolism. The polypeptide is Single-stranded DNA-binding protein 3 (ssb3) (Streptococcus agalactiae serotype V (strain ATCC BAA-611 / 2603 V/R)).